Here is a 266-residue protein sequence, read N- to C-terminus: tRNA pseudouridine synthase A (266 aa).

Catalysis depends on Asp-55, which acts as the Nucleophile. Substrate is bound at residue Tyr-110.

This sequence belongs to the tRNA pseudouridine synthase TruA family.

The enzyme catalyses uridine(38/39/40) in tRNA = pseudouridine(38/39/40) in tRNA. Its function is as follows. Formation of pseudouridine at positions 38, 39 and 40 in the anticodon stem and loop of transfer RNAs. This Thermococcus sibiricus (strain DSM 12597 / MM 739) protein is tRNA pseudouridine synthase A.